A 218-amino-acid chain; its full sequence is Large ribosomal subunit protein uL4 (218 aa).

A disordered region spans residues A46 to A100. A compositionally biased stretch (basic residues) spans G62–G73.

The protein belongs to the universal ribosomal protein uL4 family. As to quaternary structure, part of the 50S ribosomal subunit.

In terms of biological role, one of the primary rRNA binding proteins, this protein initially binds near the 5'-end of the 23S rRNA. It is important during the early stages of 50S assembly. It makes multiple contacts with different domains of the 23S rRNA in the assembled 50S subunit and ribosome. Forms part of the polypeptide exit tunnel. In Corynebacterium efficiens (strain DSM 44549 / YS-314 / AJ 12310 / JCM 11189 / NBRC 100395), this protein is Large ribosomal subunit protein uL4.